Consider the following 325-residue polypeptide: tRNA dimethylallyltransferase (325 aa).

12 to 19 (GPTASGKT) contributes to the ATP binding site. Residue 14 to 19 (TASGKT) participates in substrate binding. Interaction with substrate tRNA regions lie at residues 37-40 (DSAL), 161-165 (QRIHR), and 244-249 (RCVGYR).

Belongs to the IPP transferase family. Monomer. The cofactor is Mg(2+).

The enzyme catalyses adenosine(37) in tRNA + dimethylallyl diphosphate = N(6)-dimethylallyladenosine(37) in tRNA + diphosphate. Catalyzes the transfer of a dimethylallyl group onto the adenine at position 37 in tRNAs that read codons beginning with uridine, leading to the formation of N6-(dimethylallyl)adenosine (i(6)A). In Chromobacterium violaceum (strain ATCC 12472 / DSM 30191 / JCM 1249 / CCUG 213 / NBRC 12614 / NCIMB 9131 / NCTC 9757 / MK), this protein is tRNA dimethylallyltransferase.